The following is a 603-amino-acid chain: Zinc finger protein 415 (603 aa).

The C2H2-type 1; degenerate zinc-finger motif lies at 264-286; sequence YRYIECDKALNHGSHMTVRQVSH. 11 C2H2-type zinc fingers span residues 292–314, 320–342, 348–370, 376–398, 404–426, 432–454, 460–482, 488–510, 516–538, 544–566, and 572–594; these read YKCDLCGKVFSQKSNLARHWRVH, YKCNECDRSFSRNSCLALHRRVH, YKCYECDKVFSRNSCLALHQKTH, YTCKECGKAFSVRSTLTNHQVIH, YKCNECGKVFSQTSSLATHQRIH, YKCNECGKVFSQTSSLARHWRIH, YKCNECGKVFSYNSHLASHRRVH, YKCNECGKAFSVHSNLTTHQVIH, YKCNQCGKGFSVHSSLTTHQVIH, YKCNECGKSFSVRPNLTRHQIIH, and YKCSDCGKSFSVRPNLFRHQIIH.

As to expression, expressed in all tissues examined. Isoforms are differentially expressed. Isoform 3 and isoform 5 were highly expressed, isoform 4 moderately expressed, isoform 2 lower expression, the lowest expression level was seem with isoform 1.

Its subcellular location is the nucleus. It localises to the cytoplasm. In terms of biological role, involved in transcriptional regulation. Transcriptional activity differed among the various isoforms. All isoforms except isoform 3 seem to suppresses the transcriptional activities of AP-1 and p53/TP53. This Homo sapiens (Human) protein is Zinc finger protein 415 (ZNF415).